The following is a 196-amino-acid chain: Glycerol-3-phosphate acyltransferase 2 (196 aa).

A run of 5 helical transmembrane segments spans residues 2–22, 52–72, 80–100, 112–132, and 137–156; these read GWWL…SYLI, VGGI…FITI, IVSL…FMKF, IIFC…LVIV, and YASL…GYLL.

It belongs to the PlsY family. In terms of assembly, probably interacts with PlsX.

The protein localises to the cell inner membrane. It catalyses the reaction an acyl phosphate + sn-glycerol 3-phosphate = a 1-acyl-sn-glycero-3-phosphate + phosphate. It participates in lipid metabolism; phospholipid metabolism. Its function is as follows. Catalyzes the transfer of an acyl group from acyl-phosphate (acyl-PO(4)) to glycerol-3-phosphate (G3P) to form lysophosphatidic acid (LPA). This enzyme utilizes acyl-phosphate as fatty acyl donor, but not acyl-CoA or acyl-ACP. This Thermotoga maritima (strain ATCC 43589 / DSM 3109 / JCM 10099 / NBRC 100826 / MSB8) protein is Glycerol-3-phosphate acyltransferase 2.